The chain runs to 161 residues: Phosphopantetheine adenylyltransferase (161 aa).

Ser9 is a substrate binding site. ATP is bound by residues 9–10 (SF) and His17. Substrate contacts are provided by Lys41, Thr74, and Arg88. ATP-binding positions include 89-91 (GVR), Glu99, and 124-130 (NSFVASS).

It belongs to the bacterial CoaD family. In terms of assembly, homohexamer. The cofactor is Mg(2+).

Its subcellular location is the cytoplasm. The enzyme catalyses (R)-4'-phosphopantetheine + ATP + H(+) = 3'-dephospho-CoA + diphosphate. Its pathway is cofactor biosynthesis; coenzyme A biosynthesis; CoA from (R)-pantothenate: step 4/5. Its function is as follows. Reversibly transfers an adenylyl group from ATP to 4'-phosphopantetheine, yielding dephospho-CoA (dPCoA) and pyrophosphate. In Lactobacillus acidophilus (strain ATCC 700396 / NCK56 / N2 / NCFM), this protein is Phosphopantetheine adenylyltransferase.